Here is a 349-residue protein sequence, read N- to C-terminus: DNA replication and repair protein RecF (349 aa).

29 to 36 (GLNGVGKT) serves as a coordination point for ATP.

Belongs to the RecF family.

Its subcellular location is the cytoplasm. In terms of biological role, the RecF protein is involved in DNA metabolism; it is required for DNA replication and normal SOS inducibility. RecF binds preferentially to single-stranded, linear DNA. It also seems to bind ATP. This chain is DNA replication and repair protein RecF, found in Acholeplasma laidlawii (strain PG-8A).